Here is a 190-residue protein sequence, read N- to C-terminus: Elongation factor P-like protein (190 aa).

It belongs to the elongation factor P family.

This Shigella dysenteriae serotype 1 (strain Sd197) protein is Elongation factor P-like protein.